A 311-amino-acid chain; its full sequence is Acetaldehyde dehydrogenase 2 (311 aa).

11–14 (SGNI) provides a ligand contact to NAD(+). The active-site Acyl-thioester intermediate is the Cys131. NAD(+)-binding positions include 162 to 170 (SAGPGTRAN) and Asn289.

This sequence belongs to the acetaldehyde dehydrogenase family.

It catalyses the reaction acetaldehyde + NAD(+) + CoA = acetyl-CoA + NADH + H(+). This chain is Acetaldehyde dehydrogenase 2 (mhpF), found in Azotobacter vinelandii (strain DJ / ATCC BAA-1303).